A 330-amino-acid chain; its full sequence is uncharacterized protein (330 aa).

The active site involves His-257.

The protein belongs to the IUNH family.

This is an uncharacterized protein from Schizosaccharomyces pombe (strain 972 / ATCC 24843) (Fission yeast).